A 201-amino-acid polypeptide reads, in one-letter code: MEITTIDTKSKLKLNKEIFAYTYNEGLVHQAVVTFMNNARSGNSAQKTRSEVSGGGKKPWNQKGTGRARAGTIRSPLWRSGGVTFASKKRDYSQKLNKKMYKRALRSIISELCRTGNLVVVSDFQCDNHKTKDFLKKMNQMEISSALIIMSEVGENEYLGSRNLIDYDICDVTTIDPVSLLRFEKVVVTEAAIKKIEEQLQ.

The segment at 42–67 (GNSAQKTRSEVSGGGKKPWNQKGTGR) is disordered.

The protein belongs to the universal ribosomal protein uL4 family. Part of the 50S ribosomal subunit.

In terms of biological role, one of the primary rRNA binding proteins, this protein initially binds near the 5'-end of the 23S rRNA. It is important during the early stages of 50S assembly. It makes multiple contacts with different domains of the 23S rRNA in the assembled 50S subunit and ribosome. Functionally, forms part of the polypeptide exit tunnel. This chain is Large ribosomal subunit protein uL4, found in Legionella pneumophila (strain Lens).